A 341-amino-acid chain; its full sequence is Heme A synthase (341 aa).

8 helical membrane-spanning segments follow: residues 7-27 (VTVW…IGGI), 92-112 (LFGR…AITK), 118-138 (MVAK…MGWF), 159-179 (LFLT…CAGV), 190-210 (FFTA…GALV), 253-273 (FLHR…PFWL), 280-300 (LFLA…VSVV), and 302-322 (IFLA…GVHM). Residue histidine 255 coordinates heme. Histidine 308 serves as a coordination point for heme.

Belongs to the COX15/CtaA family. Type 2 subfamily. In terms of assembly, interacts with CtaB. Heme b is required as a cofactor.

The protein resides in the cell membrane. The enzyme catalyses Fe(II)-heme o + 2 A + H2O = Fe(II)-heme a + 2 AH2. It participates in porphyrin-containing compound metabolism; heme A biosynthesis; heme A from heme O: step 1/1. Functionally, catalyzes the conversion of heme O to heme A by two successive hydroxylations of the methyl group at C8. The first hydroxylation forms heme I, the second hydroxylation results in an unstable dihydroxymethyl group, which spontaneously dehydrates, resulting in the formyl group of heme A. The chain is Heme A synthase from Anaplasma marginale (strain St. Maries).